The sequence spans 293 residues: uncharacterized protein (293 aa).

The active site involves Asp-119.

It belongs to the pseudouridine synthase RluA family.

It catalyses the reaction a uridine in RNA = a pseudouridine in RNA. This is an uncharacterized protein from Helicobacter pylori (strain J99 / ATCC 700824) (Campylobacter pylori J99).